The following is a 156-amino-acid chain: MSKKKKKSPGTLAENRKARHDYNIEDTIEAGIVLRGTEIKSIRRGSANLKDSFAQVKNGEIYVHNMHIAPYEEGNRFNHDPLRPRKLLLHKREIEKLGTRTREIGYSIIPLKLYLKHGVCKVLIGVARGKKKYDKRQDLKDKAVKRDMQRAMKDRY.

This sequence belongs to the SmpB family.

It is found in the cytoplasm. In terms of biological role, required for rescue of stalled ribosomes mediated by trans-translation. Binds to transfer-messenger RNA (tmRNA), required for stable association of tmRNA with ribosomes. tmRNA and SmpB together mimic tRNA shape, replacing the anticodon stem-loop with SmpB. tmRNA is encoded by the ssrA gene; the 2 termini fold to resemble tRNA(Ala) and it encodes a 'tag peptide', a short internal open reading frame. During trans-translation Ala-aminoacylated tmRNA acts like a tRNA, entering the A-site of stalled ribosomes, displacing the stalled mRNA. The ribosome then switches to translate the ORF on the tmRNA; the nascent peptide is terminated with the 'tag peptide' encoded by the tmRNA and targeted for degradation. The ribosome is freed to recommence translation, which seems to be the essential function of trans-translation. The sequence is that of SsrA-binding protein from Staphylococcus carnosus (strain TM300).